Consider the following 800-residue polypeptide: Fibroblast growth factor receptor 3 (800 aa).

The signal sequence occupies residues 1–20; sequence MVPLCLLLYLATLVFPPVYS. Residues 21–122 form the Ig-like C2-type 1 domain; the sequence is AHLLSPEPTD…YTVKVIDSLS (102 aa). Topologically, residues 21-363 are extracellular; it reads AHLLSPEPTD…EMEREDDYAD (343 aa). Cys55 and Cys101 are disulfide-bonded. Asn77, Asn90, and Asn112 each carry an N-linked (GlcNAc...) asparagine glycan. A compositionally biased stretch (acidic residues) spans 124-136; sequence GDDEDYDEDEDEA. A disordered region spans residues 124–143; that stretch reads GDDEDYDEDEDEAGNGNAEA. Ig-like C2-type domains follow at residues 144-237 and 246-348; these read PYWT…YQLD and PILQ…AWLT. A disulfide bond links Cys169 and Cys221. N-linked (GlcNAc...) asparagine glycosylation is found at Asn218, Asn255, Asn287, Asn308, and Asn321. A disulfide bond links Cys268 and Cys332. The chain crosses the membrane as a helical span at residues 364–384; that stretch reads ILIYVTSCVLFILTMVIIILC. The Cytoplasmic segment spans residues 385 to 800; that stretch reads RMWINTQKTL…HHHSNGVIRT (416 aa). In terms of domain architecture, Protein kinase spans 460-739; it reads LTLGKPLGEG…RQLVEDHDRV (280 aa). ATP-binding positions include 466–474 and Lys496; that span reads LGEGCFGQV. The active-site Proton acceptor is the Asp605. Tyr635, Tyr636, Tyr712, and Tyr748 each carry phosphotyrosine; by autocatalysis. Positions 764-773 are enriched in polar residues; that stretch reads DSNSTCSSGD. Positions 764–800 are disordered; that stretch reads DSNSTCSSGDDSVFAHDPLPEEPCLPKHHHSNGVIRT.

The protein belongs to the protein kinase superfamily. Tyr protein kinase family. Fibroblast growth factor receptor subfamily. Monomer. Homodimer after ligand binding. Post-translationally, autophosphorylated. Binding of FGF family members together with heparan sulfate proteoglycan or heparin promotes receptor dimerization and autophosphorylation on tyrosine residues. Autophosphorylation occurs in trans between the two FGFR molecules present in the dimer.

It is found in the cell membrane. It catalyses the reaction L-tyrosyl-[protein] + ATP = O-phospho-L-tyrosyl-[protein] + ADP + H(+). With respect to regulation, present in an inactive conformation in the absence of bound ligand. Ligand binding leads to dimerization and activation by autophosphorylation on tyrosine residues. Tyrosine-protein kinase that acts as a cell-surface receptor for fibroblast growth factors and plays an essential role in the regulation of cell proliferation, differentiation and apoptosis. Plays an essential role in the regulation of chondrocyte differentiation, proliferation and apoptosis, and is required for normal skeleton development. Regulates both osteogenesis and postnatal bone mineralization by osteoblasts. Promotes apoptosis in chondrocytes, but can also promote cancer cell proliferation. Phosphorylates PLCG1, CBL and FRS2. Ligand binding leads to the activation of several signaling cascades. Activation of PLCG1 leads to the production of the cellular signaling molecules diacylglycerol and inositol 1,4,5-trisphosphate. Phosphorylation of FRS2 triggers recruitment of GRB2, GAB1, PIK3R1 and SOS1, and mediates activation of RAS, MAPK1/ERK2, MAPK3/ERK1 and the MAP kinase signaling pathway, as well as of the AKT1 signaling pathway. The sequence is that of Fibroblast growth factor receptor 3 (fgfr3) from Danio rerio (Zebrafish).